The following is a 402-amino-acid chain: Type II NADH:quinone oxidoreductase (402 aa).

FAD contacts are provided by residues 12–16 (GAGYA), 39–40 (NK), and valine 83. Residue glutamate 172 is part of the active site. FAD-binding positions include aspartate 302, 319–320 (AQ), and lysine 379.

This sequence belongs to the NADH dehydrogenase family. FAD is required as a cofactor.

It localises to the cell membrane. The catalysed reaction is a quinone + NADH + H(+) = a quinol + NAD(+). Functionally, alternative, nonproton pumping NADH:quinone oxidoreductase that delivers electrons to the respiratory chain by oxidation of NADH and reduction of quinones, and contributes to the regeneration of NAD(+). This is Type II NADH:quinone oxidoreductase from Staphylococcus epidermidis (strain ATCC 35984 / DSM 28319 / BCRC 17069 / CCUG 31568 / BM 3577 / RP62A).